A 220-amino-acid polypeptide reads, in one-letter code: Recombination protein RecR (220 aa).

The C4-type zinc-finger motif lies at 57–72; that stretch reads CPICFNITDAEKCDVC. In terms of domain architecture, Toprim spans 80 to 173; that stretch reads RTICVVEEPG…AISRIAYGVP (94 aa). A disordered region spans residues 190 to 220; the sequence is LTGRQTVSKPQPPQRPGDEDGADGAAVPASR.

This sequence belongs to the RecR family.

Its function is as follows. May play a role in DNA repair. It seems to be involved in an RecBC-independent recombinational process of DNA repair. It may act with RecF and RecO. This is Recombination protein RecR from Deinococcus radiodurans (strain ATCC 13939 / DSM 20539 / JCM 16871 / CCUG 27074 / LMG 4051 / NBRC 15346 / NCIMB 9279 / VKM B-1422 / R1).